The chain runs to 210 residues: uncharacterized protein (210 aa).

The PfpI endopeptidase domain maps to 4–180; the sequence is RKVYLYVFHT…AVEVLKKLDV (177 aa). Cys110 serves as the catalytic Nucleophile.

The protein belongs to the peptidase C56 family.

This is an uncharacterized protein from Bacillus subtilis (strain 168).